A 143-amino-acid chain; its full sequence is HTH-type transcriptional regulator BudR (143 aa).

The HTH lysR-type domain occupies 1–58; sequence MELRYLRYFVAVARERHFTRAAKALGISQPPLSQQIKRLEEEVGTPLFRRLTRGVELT. Residues 18-37 constitute a DNA-binding region (H-T-H motif); the sequence is FTRAAKALGISQPPLSQQIK.

Belongs to the LysR transcriptional regulatory family.

Regulator of the budABC operon for 2,3-butanediol synthesis. The chain is HTH-type transcriptional regulator BudR (budR) from Klebsiella aerogenes (Enterobacter aerogenes).